A 379-amino-acid polypeptide reads, in one-letter code: Lipid-A-disaccharide synthase (379 aa).

This sequence belongs to the LpxB family.

The enzyme catalyses a lipid X + a UDP-2-N,3-O-bis[(3R)-3-hydroxyacyl]-alpha-D-glucosamine = a lipid A disaccharide + UDP + H(+). It participates in bacterial outer membrane biogenesis; LPS lipid A biosynthesis. Condensation of UDP-2,3-diacylglucosamine and 2,3-diacylglucosamine-1-phosphate to form lipid A disaccharide, a precursor of lipid A, a phosphorylated glycolipid that anchors the lipopolysaccharide to the outer membrane of the cell. This chain is Lipid-A-disaccharide synthase, found in Persephonella marina (strain DSM 14350 / EX-H1).